The following is a 1276-amino-acid chain: MTWPVKDFNYSDPVNDNDILYLRIPQNKLITTPVKAFMITQNIWVIPERFSSDTNPSLSKPPRPTSKYQSYYDPSYLSTDEQKDTFLKGIIKLFKRINERDIGKKLINYLVVGSPFMGDSSTPEDTFDFTRHTTNIAVEKFENGSWKVTNIITPSVLIFGPLPNILDYTASLTLQGQQSNPSFEGFGTLSILKVAPEFLLTFSDVTSNQSSAVLGKSIFCMDPVIALMHELTHSLHQLYGINIPSDKRIRPQVSEGFFSQDGPNVQFEELYTFGGLDVEIIPQIERSQLREKALGHYKDIAKRLNNINKTIPSSWISNIDKYKKIFSEKYNFDKDNTGNFVVNIDKFNSLYSDLTNVMSEVVYSSQYNVKNRTHYFSRHYLPVFANILDDNIYTIRDGFNLTNKGFNIENSGQNIERNPALQKLSSESVVDLFTKVCLRLTKNSRDDSTCIKVKNNRLPYVADKDSISQEIFENKIITDETNVQNYSDKFSLDESILDGQVPINPEIVDPLLPNVNMEPLNLPGEEIVFYDDITKYVDYLNSYYYLESQKLSNNVENITLTTSVEEALGYSNKIYTFLPSLAEKVNKGVQAGLFLNWANEVVEDFTTNIMKKDTLDKISDVSVIIPYIGPALNIGNSALRGNFNQAFATAGVAFLLEGFPEFTIPALGVFTFYSSIQEREKIIKTIENCLEQRVKRWKDSYQWMVSNWLSRITTQFNHINYQMYDSLSYQADAIKAKIDLEYKKYSGSDKENIKSQVENLKNSLDVKISEAMNNINKFIRECSVTYLFKNMLPKVIDELNKFDLRTKTELINLIDSHNIILVGEVDRLKAKVNESFENTMPFNIFSYTNNSLLKDIINEYFNSINDSKILSLQNKKNALVDTSGYNAEVRVGDNVQLNTIYTNDFKLSSSGDKIIVNLNNNILYSAIYENSSVSFWIKISKDLTNSHNEYTIINSIEQNSGWKLCIRNGNIEWILQDVNRKYKSLIFDYSESLSHTGYTNKWFFVTITNNIMGYMKLYINGELKQSQKIEDLDEVKLDKTIVFGIDENIDENQMLWIRDFNIFSKELSNEDINIVYEGQILRNVIKDYWGNPLKFDTEYYIINDNYIDRYIAPESNVLVLVQYPDRSKLYTGNPITIKSVSDKNPYSRILNGDNIILHMLYNSRKYMIIRDTDTIYATQGGECSQNCVYALKLQSNLGNYGIGIFSIKNIVSKNKYCSQIFSSFRENTMLLADIYKPWRFSFKNAYTPVAVTNYETKLLSTSSFWKFISRDPGWVE.

H229 provides a ligand contact to Zn(2+). E230 is a catalytic residue. Zn(2+) contacts are provided by H233 and E269. C437 and C450 are disulfide-bonded. Residues 443-862 (NSRDDSTCIK…LKDIINEYFN (420 aa)) are translocation domain (TD). The tract at residues 458-547 (LPYVADKDSI…DYLNSYYYLE (90 aa)) is belt. The interval 863 to 1082 (SINDSKILSL…NIVYEGQILR (220 aa)) is N-terminus of receptor binding domain (N-RBD), Hcn. Residues 1083–1276 (NVIKDYWGNP…FISRDPGWVE (194 aa)) are C-terminus of receptor binding domain (C-RBD), Hcc. N-acetyl-beta-neuraminate contacts are provided by T1172, D1173, K1192, and R1239. The interval 1235-1245 (YKPWRFSFKNA) is ganglioside-binding loop. The Host ganglioside-binding motif signature appears at 1252–1255 (TNYE).

This sequence belongs to the peptidase M27 family. As to quaternary structure, heterodimer; disulfide-linked heterodimer of a light chain (LC) and a heavy chain (HC). The LC has the proteolytic/pharmacological activity. The N- and C-termini of the HC mediate channel formation and eukaryotic host cell binding, respectively. Can also be purified in complex with a non-toxic component that is larger than the HC. Single chain toxin from strain D-4947 copurifies with NTHNA, and in complexes that include NTNHA, HA-70, HA-33 and HA-17. Dichain toxin from strain CB-16 phage d-16 phi copurifies with NTHNA, and in complexes that include NTNHA, HA-55, HA-33, HA-22 and HA-17. The stoichiometry of the whole complex has been modeled as one BoNT/D, one NTNHA, three HA-70, six HA-33 and three HA-17. HC interacts with eukaryotic protein synaptic vesicle glycoprotein 2B (SV2B), which may serve as its receptor. Another group does not find a convincing interaction with SV2. It depends on Zn(2+) as a cofactor.

The protein localises to the secreted. The enzyme catalyses Limited hydrolysis of proteins of the neuroexocytosis apparatus, synaptobrevins, SNAP25 or syntaxin. No detected action on small molecule substrates.. With respect to regulation, inhibited by dipicolinic acid, captopril, 1,10-phenanthroline and EDTA. Its function is as follows. Botulinum toxin causes flaccid paralysis by inhibiting neurotransmitter (acetylcholine) release from the presynaptic membranes of nerve terminals of the eukaryotic host skeletal and autonomic nervous system, with frequent heart or respiratory failure. Precursor of botulinum neurotoxin D for which a proteinaceous coreceptor is controversial. In double SV2A/SV2B knockout mice this toxin does not degrade its synaptobrevin target; introducing SV2A, SV2B or SV2C restores target cleavage. Recognition of SV2 by this toxin does not occur via SV2 glycosylation or its large extracellular loop 4. Another group does not find a convincing interaction with SV2. Thus a protein receptor for this BoNT serotype has yet to be definitively proven. Recognizes at least 1 complex polysialylated ganglioside found on neural tissue. Electrical stimulation increases uptake of toxin in an ex vivo assay, presumably by transiently exposing a receptor usually found in eukaryotic target synaptic vesicles. Upon synaptic vesicle recycling the toxin is taken up via the endocytic pathway; when the pH of the toxin-containing endosome drops a structural rearrangement occurs so that the N-terminus of the heavy chain (HC) forms pores that allows the light chain (LC) to translocate into the cytosol. Once in the cytosol the disulfide bond linking the 2 subunits is reduced and LC cleaves its target protein on synaptic vesicles, preventing their fusion with the cytoplasmic membrane and thus neurotransmitter release. Requires complex eukaryotic host polysialogangliosides for full neurotoxicity and for binding to neurons. In terms of biological role, has proteolytic activity. After translocation into the eukaryotic host cytosol, inhibits neurotransmitter release by acting as a zinc endopeptidase that cleaves the '61-Lys-|-Leu-62' bond of synaptobrevin-1 (VAMP1), and the equivalent 'Lys-|-Leu' sites in VAMP2 and VAMP3. Cleaves the '49-Lys-|-Ile-50' bond of A.californica synaptobrevin (AC P35589). This chain probably has to be partially unfolded to translocate into the eukaryotic host cell cytosol. Functionally, responsible for host epithelial cell transcytosis, host nerve cell targeting and translocation of light chain (LC) into eukaryotic host cell cytosol. Composed of 3 subdomains; the translocation domain (TD), and N-terminus and C-terminus of the receptor-binding domain (RBD). The RBD is responsible for the adherence of the toxin to the eukaryotic target cell surface. The N-terminus of the TD wraps an extended belt around the perimeter of the LC, protecting Zn(2+) in the active site; it may also prevent premature LC dissociation from the translocation channel and protect toxin prior to translocation. The TD inserts into synaptic vesicle membrane to allow translocation into the host cytosol. The RBD binds eukaryotic host phosphatidylethanolamine, which may serve as toxin receptor. Treatment of synaptosomes with proteinase K does not reduce HC binding, suggesting there is no protein receptor or it is protected from extracellular proteases. HC significantly decreases uptake and toxicity of whole BoNT/D. HC also interferes with uptake of tetanus toxin. Has 2 closely located carbohydrate-binding receptor sites and binds at least 1 GT1b ganglioside. Bind gangliosides in the order GD2 &gt; GT1b &gt; GD1b. Interacts with eukaryotic target protein SV2B (synaptic vesicle glycoprotein 2B). Expression of SV2A, SV2B or SV2C in mice knocked-out for the SV2 proteins restores entry of BoNT/D and cleavage of VAMP2, suggesting SV2 acts as its receptor. Unlike BoNT/A and BoNT/E, toxin uptake is not mediated by large extracellular loop 4 of SV2. Another group finds very poor interaction with SV2 proteins, suggesting the possible protein receptor may not have been identified. The chain is Botulinum neurotoxin type D (botD) from Clostridium botulinum (Clostridium botulinum D bacteriophage).